A 126-amino-acid chain; its full sequence is MSLPQDLLYSKEHEWVKQEDGKLRIGITDFAQDELGDIVFVELPEIGEELKVDDPFGSVESVKTVSELYAPVSGKVVEINDDLEDSPEYVNESPYEKAWMIVIEPSDEKELEELLSAENYEAFIQD.

The Lipoyl-binding domain occupies 22–104 (KLRIGITDFA…YEKAWMIVIE (83 aa)). Position 63 is an N6-lipoyllysine (Lys63).

The protein belongs to the GcvH family. The glycine cleavage system is composed of four proteins: P, T, L and H. (R)-lipoate is required as a cofactor.

Functionally, the glycine cleavage system catalyzes the degradation of glycine. The H protein shuttles the methylamine group of glycine from the P protein to the T protein. Its function is as follows. Is also involved in protein lipoylation via its role as an octanoyl/lipoyl carrier protein intermediate. The chain is Glycine cleavage system H protein from Oceanobacillus iheyensis (strain DSM 14371 / CIP 107618 / JCM 11309 / KCTC 3954 / HTE831).